A 244-amino-acid polypeptide reads, in one-letter code: Derlin-2.2 (244 aa).

The Cytoplasmic segment spans residues 1-21 (MAQAVEEWYKQMPIITRSYLT). The helical transmembrane segment at 22-42 (AAVITTVGCSLDIISPYNLYL) threads the bilayer. The Lumenal portion of the chain corresponds to 43–96 (NPTLVVKQYQYWRLVTNFLYFRKMDLDFMFHMFFLARYCKLLEENSFRGKTADF). A helical transmembrane segment spans residues 97-117 (LYMLLFGASVLTGIVLIGGMI). The Cytoplasmic segment spans residues 118–121 (PYLS). A helical membrane pass occupies residues 122 to 142 (ASFAKIIFLSNSLTFMMVYVW). Residues 143–152 (SKQNPYIHMS) are Lumenal-facing. A helical membrane pass occupies residues 153-173 (FLGLFTFTAAYLPWVLLGFSI). Over 174–244 (LVGASAWVDL…AAPFDEIHQD (71 aa)) the chain is Cytoplasmic.

It belongs to the derlin family.

The protein localises to the endoplasmic reticulum membrane. In terms of biological role, may be involved in the degradation process of specific misfolded endoplasmic reticulum (ER) luminal proteins. The chain is Derlin-2.2 (DER2.2) from Arabidopsis thaliana (Mouse-ear cress).